Here is a 169-residue protein sequence, read N- to C-terminus: MASSEFIDPAKLDLDDQVVAINRITKVVKGGRRMRFAALVIVGDRKGHVGFGTGKAQEVPEAIRKAQAAAEKNLITVPIVGTTIPHEVIGVYGGGKIMLKPAVEGSGVAAGGAVRNVMDLAGVADVTSKRLGSNTPVNVVRATFEGLKQLKNAEEVAKLRGVSVDHLAE.

The 64-residue stretch at 14-77 folds into the S5 DRBM domain; the sequence is LDDQVVAINR…AAAEKNLITV (64 aa).

It belongs to the universal ribosomal protein uS5 family. In terms of assembly, part of the 30S ribosomal subunit. Contacts proteins S4 and S8.

In terms of biological role, with S4 and S12 plays an important role in translational accuracy. Located at the back of the 30S subunit body where it stabilizes the conformation of the head with respect to the body. This chain is Small ribosomal subunit protein uS5, found in Limosilactobacillus reuteri (strain DSM 20016) (Lactobacillus reuteri).